A 170-amino-acid chain; its full sequence is Type IV pilus assembly protein C (170 aa).

An N-terminal signal peptide occupies residues Met1–Ala23. Positions Lys87 to Ser107 are disordered. The span at Ala93–Ser107 shows a compositional bias: polar residues. A coiled-coil region spans residues Arg109–Glu166.

Its subcellular location is the periplasm. Its function is as follows. Required for stabilizing type IV pilus (T4p) in extended, nonretracted conformation on the bacterial cell surface. This is Type IV pilus assembly protein C from Neisseria gonorrhoeae (strain ATCC 700825 / FA 1090).